We begin with the raw amino-acid sequence, 847 residues long: Glycogen phosphorylase, liver form (847 aa).

N-acetylalanine is present on Ala2. Ser15 bears the Phosphoserine; by PHK; in form phosphorylase a mark. Residues 43 to 45, Tyr76, and Arg310 each bind AMP; that span reads DRN. Lys364 carries the N6-succinyllysine modification. Lys470 bears the N6-acetyllysine mark. Residues Ser524, Ser561, and Ser639 each carry the phosphoserine modification. An N6-(pyridoxal phosphate)lysine modification is found at Lys681. Lys796 is modified (N6-acetyllysine).

Belongs to the glycogen phosphorylase family. As to quaternary structure, homodimer; enzymatically active. Interacts with PPP1R3B; recruits the phosphatase PP1 which dephosphorylates and inactivates PYGL/glycogen phosphorylase. Pyridoxal 5'-phosphate serves as cofactor. Acetylation, which is up-regulated by glucose and insulin and down-regulated by glucagon, inhibits the glycogen phosphorylase activity by promoting PPP1R3B-mediated recruitment of phosphatase PP1 and Ser-15 dephosphorylation. In terms of processing, phosphorylation at Ser-15 converts inactive phosphorylase b into active phosphorylase a. Dephosphorylation of Ser-15 by phosphatase PP1 inactivates the enzyme.

It is found in the cytoplasm. The protein localises to the cytosol. The enzyme catalyses [(1-&gt;4)-alpha-D-glucosyl](n) + phosphate = [(1-&gt;4)-alpha-D-glucosyl](n-1) + alpha-D-glucose 1-phosphate. Allosterically regulated through the non-covalent binding of metabolites, being activated by AMP and inhibited by ATP, ADP, and glucose-6-phosphate. The activity is also controlled by post-translational modifications including phosphorylation and acetylation. In terms of biological role, allosteric enzyme that catalyzes the rate-limiting step in glycogen catabolism, the phosphorolytic cleavage of glycogen to produce glucose-1-phosphate, and plays a central role in maintaining cellular and organismal glucose homeostasis. In Homo sapiens (Human), this protein is Glycogen phosphorylase, liver form.